We begin with the raw amino-acid sequence, 214 residues long: Phosphatidylcholine transfer protein (214 aa).

Residue Met-1 is modified to N-acetylmethionine. In terms of domain architecture, START spans 1–212 (MAGAACCFSD…MVKACQNYHK (212 aa)). Tyr-72 and Arg-78 together coordinate a 1,2-diacyl-sn-glycero-3-phosphocholine. At Ser-139 the chain carries Phosphoserine. Gln-157 is a binding site for a 1,2-diacyl-sn-glycero-3-phosphocholine.

In terms of assembly, interacts with ACOT13/THEM2. In terms of tissue distribution, abundant in liver of pups but levels in liver decrease 10-fold about 2 weeks after birth. In adult, highly expressed in epididymis, testis, kidney and bone-marrow derived mast cells.

The protein localises to the cytoplasm. In terms of biological role, catalyzes the transfer of phosphatidylcholine between membranes. Binds a single lipid molecule. This is Phosphatidylcholine transfer protein (Pctp) from Mus musculus (Mouse).